The sequence spans 370 residues: Glutamate 5-kinase (370 aa).

Residue Lys-17 coordinates ATP. Substrate is bound by residues Ser-56, Asp-143, and Asn-155. 175 to 176 provides a ligand contact to ATP; that stretch reads SD. The PUA domain maps to 280 to 357; sequence KGEITVDAGA…DEIEGILGYP (78 aa).

It belongs to the glutamate 5-kinase family.

It is found in the cytoplasm. It catalyses the reaction L-glutamate + ATP = L-glutamyl 5-phosphate + ADP. It participates in amino-acid biosynthesis; L-proline biosynthesis; L-glutamate 5-semialdehyde from L-glutamate: step 1/2. In terms of biological role, catalyzes the transfer of a phosphate group to glutamate to form L-glutamate 5-phosphate. This chain is Glutamate 5-kinase, found in Paracoccus denitrificans (strain Pd 1222).